Consider the following 340-residue polypeptide: 4-dimethylallyltryptophan N-methyltransferase ifgB (340 aa).

It belongs to the methyltransferase superfamily. In terms of assembly, homodimer.

The enzyme catalyses 4-(3-methylbut-2-enyl)-L-tryptophan + S-adenosyl-L-methionine = 4-(3-methylbut-2-enyl)-L-abrine + S-adenosyl-L-homocysteine + H(+). It functions in the pathway alkaloid biosynthesis; ergot alkaloid biosynthesis. Functionally, 4-dimethylallyltryptophan N-methyltransferase; part of the gene cluster that mediates the biosynthesis of isofumigaclavines, fungal ergot alkaloids. The tryptophan dimethylallyltransferase ifgA catalyzes the first step of ergot alkaloid biosynthesis by condensing dimethylallyl diphosphate (DMAP) and tryptophan to form 4-dimethylallyl-L-tryptophan. The second step is catalyzed by the methyltransferase ifgB that methylates 4-dimethylallyl-L-tryptophan in the presence of S-adenosyl-L-methionine, resulting in the formation of N-methyl-dimethylallyl-L-tryptophan. The catalase ifgD and the FAD-dependent oxidoreductase ifgC then transform N-methyl-dimethylallyl-L-tryptophan to chanoclavine-I which is further oxidized by ifgE in the presence of NAD(+), resulting in the formation of chanoclavine-I aldehyde. The chanoclavine-I aldehyde reductases ifgG and/or fgaOx3 reduce chanoclavine-I aldehyde to dihydrochanoclavine-I aldehyde that spontaneously dehydrates to form 6,8-dimethyl-6,7-didehydroergoline. The festuclavine dehydrogenases ifgF1 and/or ifgF2 then catalyze the reduction of 6,8-dimethyl-6,7-didehydroergoline to form festuclavine. Hydrolysis of festuclavine by a yet undetermined cytochrome P450 monooxygenase (called ifgH) then leads to the formation of isofumigaclavine B which is in turn acetylated by ifgI to isofumigaclavine A. Penicillium roqueforti has interestingly at least two sets of genes for the consumption of chanoclavine-I aldehyde on three different loci, the OYEs ifgG/fgaOx3 and the festuclavine synthase homologs ifgF1/ifgF2. The reason for the duplication of these genes is unclear, probably to ensure the conversion of chanoclavine-I aldehyde by differential gene expression under various environmental conditions. This chain is 4-dimethylallyltryptophan N-methyltransferase ifgB, found in Penicillium roqueforti (strain FM164).